Here is a 220-residue protein sequence, read N- to C-terminus: Deoxyribose-phosphate aldolase (220 aa).

The Proton donor/acceptor role is filled by D89. K151 (schiff-base intermediate with acetaldehyde) is an active-site residue. The active-site Proton donor/acceptor is K180.

This sequence belongs to the DeoC/FbaB aldolase family. DeoC type 1 subfamily.

It is found in the cytoplasm. The enzyme catalyses 2-deoxy-D-ribose 5-phosphate = D-glyceraldehyde 3-phosphate + acetaldehyde. Its pathway is carbohydrate degradation; 2-deoxy-D-ribose 1-phosphate degradation; D-glyceraldehyde 3-phosphate and acetaldehyde from 2-deoxy-alpha-D-ribose 1-phosphate: step 2/2. Its function is as follows. Catalyzes a reversible aldol reaction between acetaldehyde and D-glyceraldehyde 3-phosphate to generate 2-deoxy-D-ribose 5-phosphate. The chain is Deoxyribose-phosphate aldolase from Bdellovibrio bacteriovorus (strain ATCC 15356 / DSM 50701 / NCIMB 9529 / HD100).